A 117-amino-acid polypeptide reads, in one-letter code: NADH-ubiquinone oxidoreductase chain 3 (117 aa).

Transmembrane regions (helical) follow at residues 4 to 24 (IILI…LASI), 60 to 80 (ITII…MIII), and 86 to 106 (IMIW…GLYH).

The protein belongs to the complex I subunit 3 family.

It localises to the mitochondrion membrane. It catalyses the reaction a ubiquinone + NADH + 5 H(+)(in) = a ubiquinol + NAD(+) + 4 H(+)(out). Functionally, core subunit of the mitochondrial membrane respiratory chain NADH dehydrogenase (Complex I) that is believed to belong to the minimal assembly required for catalysis. Complex I functions in the transfer of electrons from NADH to the respiratory chain. The immediate electron acceptor for the enzyme is believed to be ubiquinone. In Drosophila subobscura (Fruit fly), this protein is NADH-ubiquinone oxidoreductase chain 3 (mt:ND3).